Here is a 122-residue protein sequence, read N- to C-terminus: Large ribosomal subunit protein uL14 (122 aa).

The protein belongs to the universal ribosomal protein uL14 family. As to quaternary structure, part of the 50S ribosomal subunit. Forms a cluster with proteins L3 and L19. In the 70S ribosome, L14 and L19 interact and together make contacts with the 16S rRNA in bridges B5 and B8.

In terms of biological role, binds to 23S rRNA. Forms part of two intersubunit bridges in the 70S ribosome. This chain is Large ribosomal subunit protein uL14, found in Trichodesmium erythraeum (strain IMS101).